Here is a 375-residue protein sequence, read N- to C-terminus: Succinyl-diaminopimelate desuccinylase (375 aa).

A Zn(2+)-binding site is contributed by His-66. Asp-68 is a catalytic residue. Position 99 (Asp-99) interacts with Zn(2+). The Proton acceptor role is filled by Glu-133. 3 residues coordinate Zn(2+): Glu-134, Glu-162, and His-348.

The protein belongs to the peptidase M20A family. DapE subfamily. Homodimer. The cofactor is Zn(2+). Co(2+) is required as a cofactor.

The catalysed reaction is N-succinyl-(2S,6S)-2,6-diaminopimelate + H2O = (2S,6S)-2,6-diaminopimelate + succinate. Its pathway is amino-acid biosynthesis; L-lysine biosynthesis via DAP pathway; LL-2,6-diaminopimelate from (S)-tetrahydrodipicolinate (succinylase route): step 3/3. Its function is as follows. Catalyzes the hydrolysis of N-succinyl-L,L-diaminopimelic acid (SDAP), forming succinate and LL-2,6-diaminopimelate (DAP), an intermediate involved in the bacterial biosynthesis of lysine and meso-diaminopimelic acid, an essential component of bacterial cell walls. The polypeptide is Succinyl-diaminopimelate desuccinylase (Escherichia coli (strain SE11)).